The chain runs to 254 residues: 3-deoxy-manno-octulosonate cytidylyltransferase (254 aa).

Belongs to the KdsB family.

It localises to the cytoplasm. It catalyses the reaction 3-deoxy-alpha-D-manno-oct-2-ulosonate + CTP = CMP-3-deoxy-beta-D-manno-octulosonate + diphosphate. The protein operates within nucleotide-sugar biosynthesis; CMP-3-deoxy-D-manno-octulosonate biosynthesis; CMP-3-deoxy-D-manno-octulosonate from 3-deoxy-D-manno-octulosonate and CTP: step 1/1. Its pathway is bacterial outer membrane biogenesis; lipopolysaccharide biosynthesis. Functionally, activates KDO (a required 8-carbon sugar) for incorporation into bacterial lipopolysaccharide in Gram-negative bacteria. The sequence is that of 3-deoxy-manno-octulosonate cytidylyltransferase from Chlamydia caviae (strain ATCC VR-813 / DSM 19441 / 03DC25 / GPIC) (Chlamydophila caviae).